The following is a 2056-amino-acid chain: E3 ubiquitin-protein ligase TRIP12 (2056 aa).

Polar residues-rich tracts occupy residues 1-10 (MSSRPNNNPG) and 18-27 (RNTAGAQPQE). A disordered region spans residues 1-440 (MSSRPNNNPG…SGESESDDSE (440 aa)). Basic and acidic residues predominate over residues 39–51 (AENKTHSLPESRK). Composition is skewed to polar residues over residues 58-67 (KVQSNTTSGP) and 153-168 (SQEQ…STSK). 2 stretches are compositionally biased toward low complexity: residues 213-226 (LSKL…SAKA) and 234-253 (SSSS…VSAA). Polar residues-rich tracts occupy residues 317-327 (PGSSKTETSKP) and 363-375 (QKTT…TSRR). Positions 383–395 (AAAEARRQEKMAD) are enriched in basic and acidic residues. Over residues 415 to 433 (GAAASSSVAGAVGMTTSGE) the composition is skewed to low complexity. Residues 791–905 (MLKKGNAQNT…DPELAKSFIK (115 aa)) enclose the WWE domain. The span at 1027-1042 (TTISTGSGTASGNSAA) shows a compositional bias: low complexity. Disordered regions lie at residues 1027-1147 (TTIS…ASKD), 1465-1500 (EEEE…DELW), and 1632-1651 (TNPE…PRLD). Residues 1069–1082 (KRKRLPKRGPRRPK) are compositionally biased toward basic residues. Basic and acidic residues predominate over residues 1085-1094 (PPRDEDKVDN). Composition is skewed to polar residues over residues 1095–1106 (QAKSPTTTQSPK) and 1119–1129 (RLSTQSNSNNI). Positions 1560–1634 (EIIPTSEFNN…AMQRLLDTNP (75 aa)) are K-box. The HECT domain maps to 1949-2056 (PDHGYTHDSR…REGQQSFHLS (108 aa)). The active-site Glycyl thioester intermediate is Cys2023.

It belongs to the UPL family. K-HECT subfamily.

It localises to the nucleus. It is found in the nucleoplasm. The catalysed reaction is S-ubiquitinyl-[E2 ubiquitin-conjugating enzyme]-L-cysteine + [acceptor protein]-L-lysine = [E2 ubiquitin-conjugating enzyme]-L-cysteine + N(6)-ubiquitinyl-[acceptor protein]-L-lysine.. It functions in the pathway protein modification; protein ubiquitination. Its function is as follows. E3 ubiquitin-protein ligase involved in ubiquitin fusion degradation (UFD) pathway and regulation of DNA repair. Part of the ubiquitin fusion degradation (UFD) pathway, a process that mediates ubiquitination of protein at their N-terminus, regardless of the presence of lysine residues in target proteins. Acts as a key regulator of DNA damage response by acting as a suppressor of RNF168, an E3 ubiquitin-protein ligase that promotes accumulation of 'Lys-63'-linked histone H2A and H2AX at DNA damage sites, thereby acting as a guard against excessive spreading of ubiquitinated chromatin at damaged chromosomes. The polypeptide is E3 ubiquitin-protein ligase TRIP12 (trip12) (Xenopus tropicalis (Western clawed frog)).